Reading from the N-terminus, the 474-residue chain is MNYDALQLSGRKVLVLGLGDTGLSCARWLSVHGADVSVADSREAPPHAARLAETLPQVALFTGPFEAAHLAAADMLVLSPGVPLSEPAVAQAVAQGVEAVGDVELFARALAVLNAQRAALPAPQAAMRVIAITGSNGKSTVTAMCGDMCRMAGLTVCVAGNIGLPVLDALHEIEQGAAPLPQVWVLELSSFQLETTSSLDATAAAVLNLSEDHMDRYPDMAAYAAAKARIFSGNGVQVLNRDDPRTLAMAIPGRHVVSFGLDRCPTDENFGLCEDELCLGGDMLMPLSVLAVPGLHNAANALAALALTRALDLPIEALLRGLMHFKGLPHRVEKVADIDGVTWYDDSKGTNVGATEAALYGMGRRKAVVILGGDGKGQDFGPLKAAVAANARAVVLIGRDAVAIEAAIEDSGVASYRADTLPDAVEQAARLAEPGDAVLLSPACASFDMFRNYVHRAEVFVDAVKKLAAQRAQV.

G134 to T140 provides a ligand contact to ATP.

The protein belongs to the MurCDEF family.

The protein resides in the cytoplasm. The catalysed reaction is UDP-N-acetyl-alpha-D-muramoyl-L-alanine + D-glutamate + ATP = UDP-N-acetyl-alpha-D-muramoyl-L-alanyl-D-glutamate + ADP + phosphate + H(+). Its pathway is cell wall biogenesis; peptidoglycan biosynthesis. Cell wall formation. Catalyzes the addition of glutamate to the nucleotide precursor UDP-N-acetylmuramoyl-L-alanine (UMA). The protein is UDP-N-acetylmuramoylalanine--D-glutamate ligase of Thiobacillus denitrificans (strain ATCC 25259 / T1).